A 352-amino-acid chain; its full sequence is CD5 antigen-like (352 aa).

Residues 1–21 (MAPLFNLMLAILSIFVGSCFS) form the signal peptide. SRCR domains follow at residues 27–128 (VQLV…AQCE), 141–241 (VRLV…MECE), and 246–348 (LKLV…VICT). 11 cysteine pairs are disulfide-bonded: Cys36–Cys70, Cys52–Cys117, Cys65–Cys127, Cys98–Cys108, Cys166–Cys230, Cys179–Cys240, Cys211–Cys221, Cys255–Cys289, Cys271–Cys337, Cys284–Cys347, and Cys317–Cys327. N-linked (GlcNAc...) asparagine glycosylation is present at Asn99. Asn229 carries an N-linked (GlcNAc...) asparagine glycan.

In terms of assembly, interacts with FASN; the interaction is direct. Interacts (via SRCR2 and SRCR3) with pentameric IgM (via Fc region); disulfide-linked. N-glycosylated. N-glycan at Asn-99 possesses only alpha2,6-sialylated terminals, while Asn-229 possesses both alpha2,6-sialylated and non-sialylated terminals. N-glycosylation increases secretion. In terms of tissue distribution, specifically expressed in tissue macrophages. Expressed in thymus, liver, spleen and lymph nodes. Present in Th17 cells; mainly present in non-pathogenic Th17 cells.

It localises to the secreted. The protein localises to the cytoplasm. Secreted protein that acts as a key regulator of lipid synthesis: mainly expressed by macrophages in lymphoid and inflamed tissues and regulates mechanisms in inflammatory responses, such as infection or atherosclerosis. Able to inhibit lipid droplet size in adipocytes. Following incorporation into mature adipocytes via CD36-mediated endocytosis, associates with cytosolic FASN, inhibiting fatty acid synthase activity and leading to lipolysis, the degradation of triacylglycerols into glycerol and free fatty acids (FFA). CD5L-induced lipolysis occurs with progression of obesity: participates in obesity-associated inflammation following recruitment of inflammatory macrophages into adipose tissues, a cause of insulin resistance and obesity-related metabolic disease. Regulation of intracellular lipids mediated by CD5L has a direct effect on transcription regulation mediated by nuclear receptors ROR-gamma (RORC). Acts as a key regulator of metabolic switch in T-helper Th17 cells. Regulates the expression of pro-inflammatory genes in Th17 cells by altering the lipid content and limiting synthesis of cholesterol ligand of RORC, the master transcription factor of Th17-cell differentiation. CD5L is mainly present in non-pathogenic Th17 cells, where it decreases the content of polyunsaturated fatty acyls (PUFA), affecting two metabolic proteins MSMO1 and CYP51A1, which synthesize ligands of RORC, limiting RORC activity and expression of pro-inflammatory genes. Participates in obesity-associated autoimmunity via its association with IgM, interfering with the binding of IgM to Fcalpha/mu receptor and enhancing the development of long-lived plasma cells that produce high-affinity IgG autoantibodies. Also acts as an inhibitor of apoptosis in macrophages: promotes macrophage survival from the apoptotic effects of oxidized lipids in case of atherosclerosis. Involved in early response to microbial infection against various pathogens by acting as a pattern recognition receptor and by promoting autophagy. The protein is CD5 antigen-like (Cd5l) of Mus musculus (Mouse).